The chain runs to 149 residues: Large ribosomal subunit protein bL9 (149 aa).

This sequence belongs to the bacterial ribosomal protein bL9 family. In terms of assembly, part of the 50S ribosomal subunit. In stalled/collided disomes (pairs of ribosomes where the leading ribosome is stalled and a second ribosome has collided with it), bL9 in the collided ribosome contacts bS6 and uL2, while it contacts only helices of the 16S rRNA in the stalled ribosome; the inter-ribosome bridge thus formed is different from that formed between normally translating ribosomes.

Functionally, binds to the 23S rRNA. The polypeptide is Large ribosomal subunit protein bL9 (Bacillus subtilis (strain 168)).